Here is a 161-residue protein sequence, read N- to C-terminus: Epididymal protein 13 (161 aa).

The signal sequence occupies residues 1-23 (MHRSEPFLKMSLLILLFLGLAEA). N-linked (GlcNAc...) asparagine glycosylation occurs at N56.

The protein resides in the secreted. The protein is Epididymal protein 13 of Homo sapiens (Human).